The sequence spans 878 residues: Protein translocase subunit SecA (878 aa).

ATP is bound by residues Gln81, 99–103 (GEGKT), and Asp489.

Belongs to the SecA family.

The protein resides in the plastid. Its subcellular location is the chloroplast stroma. It localises to the chloroplast thylakoid membrane. It catalyses the reaction ATP + H2O + cellular proteinSide 1 = ADP + phosphate + cellular proteinSide 2.. Its function is as follows. Has a central role in coupling the hydrolysis of ATP to the transfer of proteins across the thylakoid membrane. This Thalassiosira pseudonana (Marine diatom) protein is Protein translocase subunit SecA.